The primary structure comprises 155 residues: Peptide methionine sulfoxide reductase MsrB (155 aa).

The MsrB domain occupies 15 to 137 (REALIATLNA…NSVSLTFIPT (123 aa)). Residues Cys54, Cys57, Cys103, and Cys106 each contribute to the Zn(2+) site. Cys126 functions as the Nucleophile in the catalytic mechanism.

Belongs to the MsrB Met sulfoxide reductase family. It depends on Zn(2+) as a cofactor.

It catalyses the reaction L-methionyl-[protein] + [thioredoxin]-disulfide + H2O = L-methionyl-(R)-S-oxide-[protein] + [thioredoxin]-dithiol. The polypeptide is Peptide methionine sulfoxide reductase MsrB (Xylella fastidiosa (strain 9a5c)).